Consider the following 68-residue polypeptide: Molybdenum-pterin-binding protein 3 (68 aa).

Positions 2-68 constitute a Mop domain; sequence SISARNQLKG…IKSTDVMILA (67 aa).

Its function is as follows. Binds one mole of molybdenum per mole of protein and contains a pterin. In Clostridium pasteurianum, this protein is Molybdenum-pterin-binding protein 3 (mopIII).